The following is a 421-amino-acid chain: Acyl-coenzyme A thioesterase 5 (421 aa).

Residues Ser232, Asp326, and His360 each act as charge relay system in the active site. Positions 419–421 (AKL) match the Microbody targeting signal motif.

Belongs to the C/M/P thioester hydrolase family. As to expression, highly expressed in spleen, brain, testis and proximal and distal intestine; expressed at low level in the liver.

Its subcellular location is the peroxisome. It catalyses the reaction hexadecanoyl-CoA + H2O = hexadecanoate + CoA + H(+). The catalysed reaction is decanoyl-CoA + H2O = decanoate + CoA + H(+). The enzyme catalyses octanoyl-CoA + H2O = octanoate + CoA + H(+). It carries out the reaction dodecanoyl-CoA + H2O = dodecanoate + CoA + H(+). It catalyses the reaction tetradecanoyl-CoA + H2O = tetradecanoate + CoA + H(+). The catalysed reaction is octadecanoyl-CoA + H2O = octadecanoate + CoA + H(+). The enzyme catalyses eicosanoyl-CoA + H2O = eicosanoate + CoA + H(+). It carries out the reaction (9Z)-octadecenoyl-CoA + H2O = (9Z)-octadecenoate + CoA + H(+). It catalyses the reaction (9Z,12Z)-octadecadienoyl-CoA + H2O = (9Z,12Z)-octadecadienoate + CoA + H(+). The catalysed reaction is (5Z,8Z,11Z,14Z)-eicosatetraenoyl-CoA + H2O = (5Z,8Z,11Z,14Z)-eicosatetraenoate + CoA + H(+). The enzyme catalyses (9Z)-hexadecenoyl-CoA + H2O = (9Z)-hexadecenoate + CoA + H(+). It participates in lipid metabolism; fatty acid metabolism. Catalyzes the hydrolysis of acyl-CoAs into free fatty acids and coenzyme A (CoASH), regulating their respective intracellular levels. Mainly active on medium-chain acyl-CoAs. Seems to be involved in intraperoxisomal regulation of acyl-CoA levels, but not CoASH levels. May have a function in termination of beta-oxidation of fatty acids. The chain is Acyl-coenzyme A thioesterase 5 (Acot5) from Mus musculus (Mouse).